A 314-amino-acid chain; its full sequence is Methenyltetrahydromethanopterin cyclohydrolase (314 aa).

The protein belongs to the MCH family.

It is found in the cytoplasm. It carries out the reaction 5,10-methenyl-5,6,7,8-tetrahydromethanopterin + H2O = N(5)-formyl-5,6,7,8-tetrahydromethanopterin + H(+). It participates in one-carbon metabolism; methanogenesis from CO(2); 5,10-methenyl-5,6,7,8-tetrahydromethanopterin from CO(2): step 3/3. Catalyzes the reversible interconversion of 5-formyl-H(4)MPT to methenyl-H(4)MPT(+). The polypeptide is Methenyltetrahydromethanopterin cyclohydrolase (Methanocorpusculum labreanum (strain ATCC 43576 / DSM 4855 / Z)).